The primary structure comprises 693 residues: MAREFSLEKTRNIGIMAHVDAGKTTTTERILYYTGKIHKIGETHEGASQMDWMEQEQERGITITSAATTAQWNNHRVNIIDTPGHVDFTIEVQRSLRVLDGAVTVLDSQSGVEPQTETVWRQATEYGVPRIVFANKMDKIGADFLYSVSTLHDRLQANAHPIQLPIGSEDDFRGIIDLIKMKAEIYTNDLGTDILEEDIPAEYLDQAQEYREKLIEAVAETDEELMMKYLEGEEITNEELKAGIRKATINVEFFPVLCGSAFKNKGVQLMLDAVIDYLPSPLDIPAIKGINPDTDAEETRPASDEEPFAALAFKIMTDPFVGRLTFFRVYSGVLQSGSYVLNTSKGKRERIGRILQMHANSRQEIDTVYSGDIAAAVGLKDTTTGDSLTDEKSKIILESINVPEPVIQLMVEPKSKADQDKMGIALQKLAEEDPTFRVETNVETGETVISGMGELHLDVLVDRMRREFKVEANVGAPQVSYRETFRASTQARGFFKRQSGGKGQFGDVWIEFTPNEEGKGFEFENAIVGGVVPREFIPAVEKGLVESMANGVLAGYPMVDVKAKLYDGSYHDVDSSETAFKIAASLSLKEAAKSAQPAILEPMMLVTITVPEENLGDVMGHVTARRGRVDGMEAHGNSQIVRAYVPLAEMFGYATVLRSASQGRGTFMMVFDHYEDVPKSVQEEIIKKNKGED.

The tr-type G domain occupies 8 to 282; that stretch reads EKTRNIGIMA…AVIDYLPSPL (275 aa). GTP is bound by residues 17–24, 81–85, and 135–138; these read AHVDAGKT, DTPGH, and NKMD.

Belongs to the TRAFAC class translation factor GTPase superfamily. Classic translation factor GTPase family. EF-G/EF-2 subfamily.

The protein localises to the cytoplasm. In terms of biological role, catalyzes the GTP-dependent ribosomal translocation step during translation elongation. During this step, the ribosome changes from the pre-translocational (PRE) to the post-translocational (POST) state as the newly formed A-site-bound peptidyl-tRNA and P-site-bound deacylated tRNA move to the P and E sites, respectively. Catalyzes the coordinated movement of the two tRNA molecules, the mRNA and conformational changes in the ribosome. The polypeptide is Elongation factor G (Streptococcus pneumoniae (strain CGSP14)).